A 257-amino-acid chain; its full sequence is Thiazole synthase (257 aa).

The active-site Schiff-base intermediate with DXP is the Lys96. 1-deoxy-D-xylulose 5-phosphate is bound by residues Gly157, 184–185 (AG), and 206–207 (NT).

Belongs to the ThiG family. Homotetramer. Forms heterodimers with either ThiH or ThiS.

The protein localises to the cytoplasm. The enzyme catalyses [ThiS sulfur-carrier protein]-C-terminal-Gly-aminoethanethioate + 2-iminoacetate + 1-deoxy-D-xylulose 5-phosphate = [ThiS sulfur-carrier protein]-C-terminal Gly-Gly + 2-[(2R,5Z)-2-carboxy-4-methylthiazol-5(2H)-ylidene]ethyl phosphate + 2 H2O + H(+). The protein operates within cofactor biosynthesis; thiamine diphosphate biosynthesis. Catalyzes the rearrangement of 1-deoxy-D-xylulose 5-phosphate (DXP) to produce the thiazole phosphate moiety of thiamine. Sulfur is provided by the thiocarboxylate moiety of the carrier protein ThiS. In vitro, sulfur can be provided by H(2)S. In Rhizobium meliloti (strain 1021) (Ensifer meliloti), this protein is Thiazole synthase.